The primary structure comprises 182 residues: D-lyxose ketol-isomerase (182 aa).

His-74, His-76, Glu-87, and His-142 together coordinate Mn(2+).

The protein belongs to the D-lyxose ketol-isomerase family. As to quaternary structure, homodimer. Mn(2+) serves as cofactor.

It catalyses the reaction D-lyxose = D-xylulose. In terms of biological role, sugar isomerase that catalyzes the reversible isomerization of D-lyxose to D-xylulose. Shows weak activity with D-mannose and L-ribose. The protein is D-lyxose ketol-isomerase of Cohnella laeviribosi.